We begin with the raw amino-acid sequence, 56 residues long: Large ribosomal subunit protein bL32 (56 aa).

The tract at residues Met-1 to Ala-26 is disordered.

This sequence belongs to the bacterial ribosomal protein bL32 family.

The protein is Large ribosomal subunit protein bL32 of Erwinia tasmaniensis (strain DSM 17950 / CFBP 7177 / CIP 109463 / NCPPB 4357 / Et1/99).